The sequence spans 398 residues: 4-hydroxy-3-methylbut-2-enyl diphosphate reductase (398 aa).

Cysteine 66 lines the [4Fe-4S] cluster pocket. Histidine 96 lines the (2E)-4-hydroxy-3-methylbut-2-enyl diphosphate pocket. Residue histidine 96 participates in dimethylallyl diphosphate binding. Residue histidine 96 participates in isopentenyl diphosphate binding. Cysteine 157 provides a ligand contact to [4Fe-4S] cluster. Histidine 185 provides a ligand contact to (2E)-4-hydroxy-3-methylbut-2-enyl diphosphate. Position 185 (histidine 185) interacts with dimethylallyl diphosphate. Residue histidine 185 participates in isopentenyl diphosphate binding. Glutamate 187 acts as the Proton donor in catalysis. Residue threonine 250 coordinates (2E)-4-hydroxy-3-methylbut-2-enyl diphosphate. [4Fe-4S] cluster is bound at residue cysteine 288. (2E)-4-hydroxy-3-methylbut-2-enyl diphosphate contacts are provided by serine 317, serine 318, asparagine 319, and serine 379. Residues serine 317, serine 318, asparagine 319, and serine 379 each coordinate dimethylallyl diphosphate. The isopentenyl diphosphate site is built by serine 317, serine 318, asparagine 319, and serine 379.

This sequence belongs to the IspH family. It depends on [4Fe-4S] cluster as a cofactor.

It carries out the reaction isopentenyl diphosphate + 2 oxidized [2Fe-2S]-[ferredoxin] + H2O = (2E)-4-hydroxy-3-methylbut-2-enyl diphosphate + 2 reduced [2Fe-2S]-[ferredoxin] + 2 H(+). The catalysed reaction is dimethylallyl diphosphate + 2 oxidized [2Fe-2S]-[ferredoxin] + H2O = (2E)-4-hydroxy-3-methylbut-2-enyl diphosphate + 2 reduced [2Fe-2S]-[ferredoxin] + 2 H(+). It participates in isoprenoid biosynthesis; dimethylallyl diphosphate biosynthesis; dimethylallyl diphosphate from (2E)-4-hydroxy-3-methylbutenyl diphosphate: step 1/1. It functions in the pathway isoprenoid biosynthesis; isopentenyl diphosphate biosynthesis via DXP pathway; isopentenyl diphosphate from 1-deoxy-D-xylulose 5-phosphate: step 6/6. Functionally, catalyzes the conversion of 1-hydroxy-2-methyl-2-(E)-butenyl 4-diphosphate (HMBPP) into a mixture of isopentenyl diphosphate (IPP) and dimethylallyl diphosphate (DMAPP). Acts in the terminal step of the DOXP/MEP pathway for isoprenoid precursor biosynthesis. The chain is 4-hydroxy-3-methylbut-2-enyl diphosphate reductase from Synechococcus sp. (strain ATCC 27144 / PCC 6301 / SAUG 1402/1) (Anacystis nidulans).